Reading from the N-terminus, the 2212-residue chain is Nonribosomal peptide synthetase ftmPS (2212 aa).

The interval 74 to 473 is adenylation 1; it reads TYAELDSLSD…IEHHLQQTLP (400 aa). Residues 592-669 form the Carrier 1 domain; sequence PPSTLKETTI…EQSQRAGLIQ (78 aa). At S629 the chain carries O-(pantetheine 4'-phosphoryl)serine. Residues 708 to 973 form a condensation 1 region; that stretch reads EDIYPCTALQ…IATVPLRIRV (266 aa). An adenylation 2 region spans residues 1167–1564; that stretch reads TYRELWAHSS…LSAVEASLMR (398 aa). The Carrier 2 domain occupies 1678 to 1757; it reads PMSDDNERRL…QFRHLITEDD (80 aa). S1715 bears the O-(pantetheine 4'-phosphoryl)serine mark. The tract at residues 1815–2070 is condensation 2; that stretch reads HFQFDLSGAI…CTNYIPYRLS (256 aa).

Belongs to the NRP synthetase family.

The enzyme catalyses L-proline + L-tryptophan + 2 ATP = brevianamide F + 2 AMP + 2 diphosphate + 2 H(+). The protein operates within mycotoxin biosynthesis. Functionally, nonribosomal peptide synthetase; part of the gene cluster that mediates the biosynthesis of fumitremorgins, indole alkaloids that carry not only intriguing chemical structures, but also interesting biological and pharmacological activities. The biosynthesis of fumitremorgin-type alkaloids begins by condensation of the two amino acids L-tryptophan and L-proline to brevianamide F, catalyzed by the non-ribosomal peptide synthetase ftmPS/ftmA. Brevianamide F is then prenylated by the prenyltransferase ftmPT1/ftmB in the presence of dimethylallyl diphosphate, resulting in the formation of tryprostatin B. The three cytochrome P450 monooxygenases, ftmP450-1/ftmC, ftmP450-2/ftmE and ftmP450-3/FtmG, are responsible for the conversion of tryprostatin B to 6-hydroxytryprostatin B, tryprostatin A to fumitremorgin C and fumitremorgin C to 12,13-dihydroxyfumitremorgin C, respectively. The putative methyltransferase ftmMT/ftmD is expected for the conversion of 6-hydroxytryprostatin B to tryprostatin A. FtmPT2/FtmH catalyzes the prenylation of 12,13-dihydroxyfumitre-morgin C in the presence of dimethylallyl diphosphate, resulting in the formation of fumitremorgin B. Fumitremorgin B is further converted to verruculogen by ftmOx1/ftmF via the insertion of an endoperoxide bond between the two prenyl moieties. Finally, verruculogen is further converted to fumitremorgin A by the verruculogen prenyltransferase ftmPT3. The sequence is that of Nonribosomal peptide synthetase ftmPS (ftmPS) from Neosartorya fischeri (strain ATCC 1020 / DSM 3700 / CBS 544.65 / FGSC A1164 / JCM 1740 / NRRL 181 / WB 181) (Aspergillus fischerianus).